Here is a 292-residue protein sequence, read N- to C-terminus: Ribosomal protein L11 methyltransferase (292 aa).

4 residues coordinate S-adenosyl-L-methionine: T143, G164, D186, and N228.

The protein belongs to the methyltransferase superfamily. PrmA family.

The protein resides in the cytoplasm. The catalysed reaction is L-lysyl-[protein] + 3 S-adenosyl-L-methionine = N(6),N(6),N(6)-trimethyl-L-lysyl-[protein] + 3 S-adenosyl-L-homocysteine + 3 H(+). Functionally, methylates ribosomal protein L11. In Aeromonas hydrophila subsp. hydrophila (strain ATCC 7966 / DSM 30187 / BCRC 13018 / CCUG 14551 / JCM 1027 / KCTC 2358 / NCIMB 9240 / NCTC 8049), this protein is Ribosomal protein L11 methyltransferase.